A 357-amino-acid chain; its full sequence is uncharacterized protein (357 aa).

Residues 27 to 242 enclose the Radical SAM core domain; sequence HFGNTVTFER…VSSVRLNFPK (216 aa). Positions 44, 50, and 53 each coordinate [4Fe-4S] cluster.

The cofactor is [4Fe-4S] cluster.

This is an uncharacterized protein from Methanocaldococcus jannaschii (strain ATCC 43067 / DSM 2661 / JAL-1 / JCM 10045 / NBRC 100440) (Methanococcus jannaschii).